The primary structure comprises 116 residues: Nucleoid-associated protein P9301_00191 (116 aa).

The protein belongs to the YbaB/EbfC family. As to quaternary structure, homodimer.

Its subcellular location is the cytoplasm. It localises to the nucleoid. Functionally, binds to DNA and alters its conformation. May be involved in regulation of gene expression, nucleoid organization and DNA protection. The chain is Nucleoid-associated protein P9301_00191 from Prochlorococcus marinus (strain MIT 9301).